Reading from the N-terminus, the 418-residue chain is uncharacterized protein (418 aa).

The disordered stretch occupies residues 1-24 (MSGTAGFITVSPGPPTEAPGGFPR).

To A.pernix APE_1276 and S.solfataricus SSO2105.

This is an uncharacterized protein from Aeropyrum pernix (strain ATCC 700893 / DSM 11879 / JCM 9820 / NBRC 100138 / K1).